Here is a 199-residue protein sequence, read N- to C-terminus: MAADSAPMNLTHHFLIAMPGMEDKTFNRSVVYLCEHSERGALGLVINKPSDINLKVLFEKIELHLSRPELGDAPVFQGGPVQTERGFVLHEPVFTHAEKPEESVYASTMTIPGGLEMTTSKDVLEALATGAGPRKVLVSLGYSAWGEGQLESELAENSWLTVGADPAVIFDTPVEQRYDRALLLLGLEAWKLSPEAGHA.

It belongs to the UPF0301 (AlgH) family.

The sequence is that of UPF0301 protein Vapar_4617 from Variovorax paradoxus (strain S110).